Reading from the N-terminus, the 309-residue chain is Probable (S)-ureidoglycine aminohydrolase (309 aa).

The N-terminal stretch at 1 to 22 (MMLPRLLLLVVASALPLASVAA) is a signal peptide. Residues Glu-245, His-247, His-251, and Gln-285 each contribute to the Mn(2+) site. Substrate is bound at residue Glu-245. Positions 285, 297, and 301 each coordinate substrate.

Belongs to the UGHY family. In terms of assembly, homooctamer. Requires Mn(2+) as cofactor.

The protein localises to the endoplasmic reticulum. It carries out the reaction (S)-2-ureidoglycine + H2O = (S)-ureidoglycolate + NH4(+). Involved in the catabolism of purine nucleotides. The sequential activity of AAH, UGLYAH and UAH allows a complete purine breakdown without the intermediate generation of urea. This Oryza sativa subsp. japonica (Rice) protein is Probable (S)-ureidoglycine aminohydrolase (UGLYAH).